The primary structure comprises 257 residues: Leucine-rich repeat-containing protein 3 (257 aa).

A signal peptide spans 1-32 (MGPRGRQSPSATLAPSQGSCFFILFCLRLGAS). Positions 33–64 (CPQACQCPDHAGAVAVHCSSRGLQEIPRDIPA) constitute an LRRNT domain. 3 LRR repeats span residues 65 to 86 (DTVL…AFQH), 89 to 110 (QLRE…AFSG), and 114 to 135 (GLRL…ALGK). The LRRCT domain occupies 145–198 (NPLHCECALQEALWELKLDPDSVDEIACHTSAQEQFVGKPLIQVLDSGASFCST). A helical transmembrane segment spans residues 205-225 (VAMLVTMFGWFTMVIAYVVYY).

It belongs to the LRRC3 family.

It localises to the membrane. This chain is Leucine-rich repeat-containing protein 3 (Lrrc3), found in Mus musculus (Mouse).